The chain runs to 417 residues: Serine hydroxymethyltransferase (417 aa).

Residues Leu-112 and 116 to 118 (GHL) contribute to the (6S)-5,6,7,8-tetrahydrofolate site. Lys-221 is subject to N6-(pyridoxal phosphate)lysine. Glu-247 contacts (6S)-5,6,7,8-tetrahydrofolate.

The protein belongs to the SHMT family. As to quaternary structure, homodimer. Requires pyridoxal 5'-phosphate as cofactor.

The protein localises to the cytoplasm. It catalyses the reaction (6R)-5,10-methylene-5,6,7,8-tetrahydrofolate + glycine + H2O = (6S)-5,6,7,8-tetrahydrofolate + L-serine. It participates in one-carbon metabolism; tetrahydrofolate interconversion. Its pathway is amino-acid biosynthesis; glycine biosynthesis; glycine from L-serine: step 1/1. Its function is as follows. Catalyzes the reversible interconversion of serine and glycine with tetrahydrofolate (THF) serving as the one-carbon carrier. This reaction serves as the major source of one-carbon groups required for the biosynthesis of purines, thymidylate, methionine, and other important biomolecules. Also exhibits THF-independent aldolase activity toward beta-hydroxyamino acids, producing glycine and aldehydes, via a retro-aldol mechanism. The polypeptide is Serine hydroxymethyltransferase (Borrelia garinii subsp. bavariensis (strain ATCC BAA-2496 / DSM 23469 / PBi) (Borreliella bavariensis)).